A 188-amino-acid polypeptide reads, in one-letter code: ATP synthase subunit delta (188 aa).

This sequence belongs to the ATPase delta chain family. As to quaternary structure, F-type ATPases have 2 components, F(1) - the catalytic core - and F(0) - the membrane proton channel. F(1) has five subunits: alpha(3), beta(3), gamma(1), delta(1), epsilon(1). F(0) has three main subunits: a(1), b(2) and c(10-14). The alpha and beta chains form an alternating ring which encloses part of the gamma chain. F(1) is attached to F(0) by a central stalk formed by the gamma and epsilon chains, while a peripheral stalk is formed by the delta and b chains.

It localises to the cell inner membrane. Its function is as follows. F(1)F(0) ATP synthase produces ATP from ADP in the presence of a proton or sodium gradient. F-type ATPases consist of two structural domains, F(1) containing the extramembraneous catalytic core and F(0) containing the membrane proton channel, linked together by a central stalk and a peripheral stalk. During catalysis, ATP synthesis in the catalytic domain of F(1) is coupled via a rotary mechanism of the central stalk subunits to proton translocation. This protein is part of the stalk that links CF(0) to CF(1). It either transmits conformational changes from CF(0) to CF(1) or is implicated in proton conduction. The chain is ATP synthase subunit delta from Rhizobium leguminosarum bv. trifolii (strain WSM2304).